Reading from the N-terminus, the 118-residue chain is Large ribosomal subunit protein bL17 (118 aa).

Belongs to the bacterial ribosomal protein bL17 family. As to quaternary structure, part of the 50S ribosomal subunit. Contacts protein L32.

This chain is Large ribosomal subunit protein bL17, found in Campylobacter fetus subsp. fetus (strain 82-40).